The chain runs to 373 residues: D-amino-acid oxidase 3 (373 aa).

Positions 1-19 (MVKYDAVILGSGVLGLSIA) are cleaved as a signal peptide. FAD contacts are provided by serine 11, leucine 14, aspartate 35, alanine 46, serine 47, glycine 51, and asparagine 53. Phenylalanine 57 serves as a coordination point for anthranilate. The N-linked (GlcNAc...) asparagine glycan is linked to asparagine 180. Residues cysteine 214 and cysteine 271 are joined by a disulfide bond. Anthranilate contacts are provided by tyrosine 229, tyrosine 246, and arginine 296. The (R)-lactate site is built by tyrosine 229, tyrosine 246, and arginine 296. FAD-binding residues include arginine 296, glycine 342, glycine 345, tyrosine 346, and glutamine 347. The Microbody targeting signal motif lies at 371–373 (AKL).

This sequence belongs to the DAMOX/DASOX family. It depends on FAD as a cofactor.

It localises to the peroxisome matrix. The catalysed reaction is a D-alpha-amino acid + O2 + H2O = a 2-oxocarboxylate + H2O2 + NH4(+). In terms of biological role, catalyzes the oxidative deamination of D-amino acids with broad substrate specificity. Enables the organism to utilize D-amino acids as a source of nutrients. Enables the organism to utilize D-glutamate and D-methionine as a nitrogen source. Protects the organism from the toxicity of D-amino acids, including from D-glutamate. May play a role in its interaction with the host. The polypeptide is D-amino-acid oxidase 3 (Cryptococcus neoformans var. grubii serotype A (strain H99 / ATCC 208821 / CBS 10515 / FGSC 9487) (Filobasidiella neoformans var. grubii)).